Reading from the N-terminus, the 469-residue chain is Regulator of G-protein signaling 7 (469 aa).

One can recognise a DEP domain in the interval 37–112 (EKNGIPIRTV…DDGTFYRFQT (76 aa)). 2 positions are modified to phosphoserine: Ser-229 and Ser-241. The tract at residues 235-256 (NDIRSHSPTHTPTPETKPPTED) is disordered. Phosphothreonine is present on Thr-243. The G protein gamma domain maps to 255–316 (EDELQQQIKY…LSDDTTFWEL (62 aa)). The RGS domain occupies 333–448 (GMDEALKDPV…IRSSAYQELL (116 aa)). At Ser-434 the chain carries Phosphoserine.

As to quaternary structure, interacts with GNB5, forming the RGS7-GNB5 complex. Interacts with GPR158; promotes the GTPase activator activity of the RGS7-GNB5 complex in absence of glycine, in contrast GTPase activator activity of the RGS7-GNB5 complex is inhibited in presence of glycine. Interacts with GPR179. Interacts with PKD1; this prevents rapid proteasomal degradation. Interacts with RGS7BP, leading to regulate the subcellular location of the heterodimer formed with GNB5. Interacts (phosphorylated form) with 14-3-3 protein YWHAQ. Interacts with SNAPIN. Interacts with GNAI1. Interacts with GNAO1, GNAI3 and GNAZ. In terms of processing, palmitoylated. Post-translationally, ubiquitinated, leading to rapid proteasomal degradation. Phosphorylation and subsequent interaction with 14-3-3 proteins inhibits GAP activity. As to expression, detected in retina (at protein level).

It is found in the cytoplasm. The protein resides in the cytosol. The protein localises to the cell membrane. It localises to the membrane. GTPase activator component of the RGS7-GNB5 complex that regulates G protein-coupled receptor signaling cascades. The RGS7-GNB5 complex acts as an inhibitor signal transduction by promoting the GTPase activity of G protein alpha subunits, such as GNAO1, thereby driving them into their inactive GDP-bound form. May play a role in synaptic vesicle exocytosis. Glycine-dependent regulation of the RGS7-GNB5 complex by GPR158 affects mood and cognition via its ability to regulate neuronal excitability in L2/L3 pyramidal neurons of the prefrontal cortex. Modulates the activity of potassium channels that are activated by GNAO1 in response to muscarinic acetylcholine receptor M2/CHRM2 signaling. In Bos taurus (Bovine), this protein is Regulator of G-protein signaling 7 (RGS7).